The chain runs to 95 residues: N(2)-fixation sustaining protein CowN (95 aa).

It belongs to the CowN family.

Its function is as follows. Is required to sustain N(2)-dependent growth in the presence of low levels of carbon monoxide (CO). Probably acts by protecting the N(2) fixation ability of the nitrogenase complex, which is inactivated in the presence of CO. This is N(2)-fixation sustaining protein CowN from Allochromatium vinosum (strain ATCC 17899 / DSM 180 / NBRC 103801 / NCIMB 10441 / D) (Chromatium vinosum).